We begin with the raw amino-acid sequence, 271 residues long: Mannosyl-3-phosphoglycerate phosphatase (271 aa).

Asp13 (nucleophile) is an active-site residue. Mg(2+) contacts are provided by Asp13, Asp15, and Asp214.

This sequence belongs to the HAD-like hydrolase superfamily. MPGP family. Mg(2+) serves as cofactor.

It localises to the cytoplasm. The enzyme catalyses 2-O-(alpha-D-mannosyl)-3-phosphoglycerate + H2O = (2R)-2-O-(alpha-D-mannosyl)-glycerate + phosphate. This chain is Mannosyl-3-phosphoglycerate phosphatase (yedP), found in Shigella sonnei (strain Ss046).